The sequence spans 283 residues: Diaminopimelate epimerase (283 aa).

Residues Asn-13, Gln-45, and Asn-65 each coordinate substrate. Cys-74 serves as the catalytic Proton donor. Substrate is bound by residues 75-76, Asn-156, Asn-190, and 208-209; these read GN and ER. Residue Cys-217 is the Proton acceptor of the active site. 218–219 serves as a coordination point for substrate; sequence GS.

This sequence belongs to the diaminopimelate epimerase family. In terms of assembly, homodimer.

The protein localises to the cytoplasm. The catalysed reaction is (2S,6S)-2,6-diaminopimelate = meso-2,6-diaminopimelate. It participates in amino-acid biosynthesis; L-lysine biosynthesis via DAP pathway; DL-2,6-diaminopimelate from LL-2,6-diaminopimelate: step 1/1. In terms of biological role, catalyzes the stereoinversion of LL-2,6-diaminopimelate (L,L-DAP) to meso-diaminopimelate (meso-DAP), a precursor of L-lysine and an essential component of the bacterial peptidoglycan. The chain is Diaminopimelate epimerase from Bartonella quintana (strain Toulouse) (Rochalimaea quintana).